The primary structure comprises 186 residues: UPF0340 protein M6_Spy1622 (186 aa).

The protein belongs to the UPF0340 family.

This is UPF0340 protein M6_Spy1622 from Streptococcus pyogenes serotype M6 (strain ATCC BAA-946 / MGAS10394).